The chain runs to 1008 residues: Collagen alpha-1(I) chain (1008 aa).

Positions 1–1008 (GGISVPGPMG…PGPPGPPGPP (1008 aa)) are disordered. A 4-hydroxyproline mark is found at P18, P21, P23, P32, P35, P38, P52, P67, P73, P82, and P88. Positions 55–69 (NGDDGEAGKPGRPGE) are enriched in basic and acidic residues. K91 carries the 5-hydroxylysine; alternate modification. A glycan (O-linked (Gal...) hydroxylysine; alternate) is linked at K91. S97 carries the phosphoserine modification. Residues 105 to 121 (DAGPAGPKGEPGSPGEN) show a composition bias toward low complexity. 4-hydroxyproline is present on residues P115, P118, P124, P133, P139, P160, P169, P172, P199, P202, P214, P220, P229, P235, and P238. Positions 139–157 (PGASGPAGARGNDGAAGAA) are enriched in low complexity. Residues 159-171 (PPGPTGPAGPPGF) are compositionally biased toward pro residues. The span at 205-235 (AGAAGPAGNPGADGQPGAKGANGAPGIAGAP) shows a compositional bias: low complexity. The span at 236–255 (GFPGRGPSGPQGPSGPGPKG) shows a compositional bias: gly residues. A 5-hydroxylysine modification is found at K254. P260, P263, P275, P284, P299, P305, P314, and P320 each carry 4-hydroxyproline. Residues 309–318 (GERGGPGSRG) show a composition bias toward gly residues. 5-hydroxylysine is present on K329. Residues P338, P347, P353, P359, P368, P371, P380, P389, P395, P407, P416, P425, P428, P446, P463, P469, P475, P481, P487, P493, P505, P514, P523, P535, P538, P544, P550, and P559 each carry the 4-hydroxyproline modification. The span at 362-388 (KGLTGSPGSPGPDGKTGPPGPAGQDGR) shows a compositional bias: low complexity. Residues 397 to 416 (ARGQAGVMGFPGPKGAAGEP) are compositionally biased toward low complexity. Low complexity predominate over residues 475–484 (PGEAGKPGEQ). A compositionally biased stretch (low complexity) spans 519–547 (PRGAPGNDGAKGDAGAPGAPGSQGAPGLQ). Position 571 is a 5-hydroxylysine (K571). 4-hydroxyproline is present on residues P577, P592, and P598. Residues 604 to 618 (SGPSGPAGPTGARGA) are compositionally biased toward low complexity. A Phosphoserine modification is found at S607. 8 positions are modified to 4-hydroxyproline: P619, P625, P628, P637, P643, P661, P670, and P679. Over residues 631–658 (AGFAGPPGADGQPGAKGEPGDAGAKGDA) the composition is skewed to low complexity. Positions 660–672 (PPGPAGPTGPPGP) are enriched in pro residues. The residue at position 682 (K682) is a 5-hydroxylysine. The span at 687-703 (SAGPPGATGFPGAAGRV) shows a compositional bias: low complexity. A 4-hydroxyproline mark is found at P691 and P697. 3-hydroxyproline is present on P705. 4-hydroxyproline is present on residues P706, P717, P738, P747, P755, P764, P781, P790, P793, P799, P814, P820, P826, P835, and P841. The segment covering 731-740 (ETGPAGRPGE) has biased composition (low complexity). Low complexity predominate over residues 752-764 (KGSPGADGPAGAP). Residues 813 to 823 (PPGPVGPPGLA) show a composition bias toward pro residues. Over residues 825–840 (PPGESGREGSPGAEGS) the composition is skewed to low complexity. The residue at position 850 (K850) is a 5-hydroxylysine. Positions 858–873 (PGPPGAPGAPGAPGPV) are enriched in pro residues. 4-hydroxyproline occurs at positions 861, 864, and 867. Positions 894-908 (AGPAGARGPAGPQGP) are enriched in low complexity. Over residues 909–923 (RGDKGETGEQGDRGI) the composition is skewed to basic and acidic residues. At K912 the chain carries 5-hydroxylysine. At K924 the chain carries 5-hydroxylysine; alternate. K924 carries an O-linked (Gal...) hydroxylysine; alternate glycan. 4 positions are modified to 4-hydroxyproline: P939, P942, P960, and P975. Over residues 942-975 (PGEQGPSGASGPAGPRGPPGSAGSPGKDGLNGLP) the composition is skewed to low complexity. Residue P980 is modified to 3-hydroxyproline. P981 bears the 4-hydroxyproline mark. Pro residues predominate over residues 993-1008 (VGPPGPPGPPGPPGPP). The residue at position 995 (P995) is a 3-hydroxyproline. P996 carries the post-translational modification 4-hydroxyproline. P998 carries the post-translational modification 3-hydroxyproline. At P999 the chain carries 4-hydroxyproline. The residue at position 1001 (P1001) is a 3-hydroxyproline. A 4-hydroxyproline mark is found at P1002, P1005, and P1008.

The protein belongs to the fibrillar collagen family. In terms of assembly, trimers of one alpha 2(I) and two alpha 1(I) chains. Post-translationally, contains mostly 4-hydroxyproline. Proline residues at the third position of the tripeptide repeating unit (G-X-Y) are hydroxylated in some or all of the chains. Contains 3-hydroxyproline at a few sites. This modification occurs on the first proline residue in the sequence motif Gly-Pro-Hyp, where Hyp is 4-hydroxyproline. In terms of processing, lysine residues at the third position of the tripeptide repeating unit (G-X-Y) are 5-hydroxylated in some or all of the chains. Post-translationally, O-glycosylated on hydroxylated lysine residues. The O-linked glycan consists of a Glc-Gal disaccharide. In terms of tissue distribution, expressed in bones.

The protein resides in the secreted. The protein localises to the extracellular space. It is found in the extracellular matrix. Functionally, type I collagen is a member of group I collagen (fibrillar forming collagen). This is Collagen alpha-1(I) chain from Paramylodon harlani (Harlan's ground sloth).